A 397-amino-acid polypeptide reads, in one-letter code: Tryptophan synthase beta chain 1 (397 aa).

At K94 the chain carries N6-(pyridoxal phosphate)lysine.

This sequence belongs to the TrpB family. Tetramer of two alpha and two beta chains. Requires pyridoxal 5'-phosphate as cofactor.

The enzyme catalyses (1S,2R)-1-C-(indol-3-yl)glycerol 3-phosphate + L-serine = D-glyceraldehyde 3-phosphate + L-tryptophan + H2O. It participates in amino-acid biosynthesis; L-tryptophan biosynthesis; L-tryptophan from chorismate: step 5/5. In terms of biological role, the beta subunit is responsible for the synthesis of L-tryptophan from indole and L-serine. This is Tryptophan synthase beta chain 1 (trpB1) from Archaeoglobus fulgidus (strain ATCC 49558 / DSM 4304 / JCM 9628 / NBRC 100126 / VC-16).